Consider the following 603-residue polypeptide: HAUS augmin-like complex subunit 3 (603 aa).

Position 2 is an N-acetylserine (Ser-2). Coiled coils occupy residues 93–177, 305–336, 389–426, and 458–495; these read RLDD…TQLM, VDKENLDAKISSLTSEIMKLEKEVTQIKDRSL, LSYEIELRKHRDIYRQLENLVQELSQSNMMLYKQLEML, and ENKKKELFLTHGNLEEVAEKLKQNISLVQDQLAVSAQE.

This sequence belongs to the HAUS3 family. In terms of assembly, component of the HAUS augmin-like complex. The complex interacts with the gamma-tubulin ring complex and this interaction is required for spindle assembly. Interacts with EML3 (phosphorylated at 'Thr-881').

It localises to the cytoplasm. It is found in the cytoskeleton. Its subcellular location is the microtubule organizing center. The protein resides in the centrosome. The protein localises to the spindle. In terms of biological role, contributes to mitotic spindle assembly, maintenance of centrosome integrity and completion of cytokinesis as part of the HAUS augmin-like complex. This chain is HAUS augmin-like complex subunit 3 (HAUS3), found in Homo sapiens (Human).